Consider the following 458-residue polypeptide: Mitochondrial distribution and morphology protein 10 (458 aa).

Positions 307–339 are disordered; it reads LDQRRTEPLDAPNTNSSVFSKERVQKKQGPKED. Over residues 326 to 339 the composition is skewed to basic and acidic residues; it reads SKERVQKKQGPKED.

It belongs to the MDM10 family. Component of the ER-mitochondria encounter structure (ERMES) or MDM complex, composed of MMM1, MDM10, MDM12 and MDM34. Associates with the mitochondrial outer membrane sorting assembly machinery SAM(core) complex.

The protein resides in the mitochondrion outer membrane. Component of the ERMES/MDM complex, which serves as a molecular tether to connect the endoplasmic reticulum and mitochondria. Components of this complex are involved in the control of mitochondrial shape and protein biogenesis and may function in phospholipid exchange. MDM10 is involved in the late assembly steps of the general translocase of the mitochondrial outer membrane (TOM complex). Functions in the TOM40-specific route of the assembly of outer membrane beta-barrel proteins, including the association of TOM40 with the receptor TOM22 and small TOM proteins. Can associate with the SAM(core) complex as well as the MDM12-MMM1 complex, both involved in late steps of the major beta-barrel assembly pathway, that is responsible for biogenesis of all outer membrane beta-barrel proteins. May act as a switch that shuttles between both complexes and channels precursor proteins into the TOM40-specific pathway. Plays a role in mitochondrial morphology and in the inheritance of mitochondria. The sequence is that of Mitochondrial distribution and morphology protein 10 from Lachancea thermotolerans (strain ATCC 56472 / CBS 6340 / NRRL Y-8284) (Yeast).